A 431-amino-acid chain; its full sequence is Enolase (431 aa).

(2R)-2-phosphoglycerate is bound at residue glutamine 167. The Proton donor role is filled by glutamate 209. Mg(2+) is bound by residues aspartate 246, glutamate 289, and aspartate 316. (2R)-2-phosphoglycerate is bound by residues lysine 341, arginine 370, serine 371, and lysine 392. The active-site Proton acceptor is lysine 341.

This sequence belongs to the enolase family. Component of the RNA degradosome, a multiprotein complex involved in RNA processing and mRNA degradation. Requires Mg(2+) as cofactor.

Its subcellular location is the cytoplasm. It is found in the secreted. The protein localises to the cell surface. The catalysed reaction is (2R)-2-phosphoglycerate = phosphoenolpyruvate + H2O. It participates in carbohydrate degradation; glycolysis; pyruvate from D-glyceraldehyde 3-phosphate: step 4/5. Catalyzes the reversible conversion of 2-phosphoglycerate (2-PG) into phosphoenolpyruvate (PEP). It is essential for the degradation of carbohydrates via glycolysis. The protein is Enolase of Shewanella oneidensis (strain ATCC 700550 / JCM 31522 / CIP 106686 / LMG 19005 / NCIMB 14063 / MR-1).